Consider the following 394-residue polypeptide: Obg-like ATPase 1 (394 aa).

One can recognise an OBG-type G domain in the interval leucine 25 to cysteine 282. ATP is bound by residues asparagine 34–threonine 39, phenylalanine 56–glutamate 60, and aspartate 94–glycine 97. Positions 38 and 58 each coordinate Mg(2+). Residue phenylalanine 129 coordinates GTP. Residues asparagine 230–leucine 231, leucine 231, and serine 263–valine 265 each bind ATP. Serine 263–valine 265 is a GTP binding site. The region spanning asparagine 303–phenylalanine 386 is the TGS domain.

Belongs to the TRAFAC class OBG-HflX-like GTPase superfamily. OBG GTPase family. YchF/OLA1 subfamily. As to quaternary structure, monomer (Potential). Interacts with CAR4/GAP1. It depends on Mg(2+) as a cofactor.

It is found in the cytoplasm. Its subcellular location is the cytosol. Activated by GAP1. Its function is as follows. Hydrolyzes ATP, and can also hydrolyze GTP with lower efficiency. Has lower affinity for GTP (Potential). Exhibits GTPase activity. Confers sensitivity to salinity stress by suppressing the anti-oxidation enzymatic activities and increasing lipid peroxidation thus leading to the accumulation of reactive oxygen species (ROS). Acts as a negative regulator of disease resistance against bacterial pathogen. This Arabidopsis thaliana (Mouse-ear cress) protein is Obg-like ATPase 1.